A 202-amino-acid polypeptide reads, in one-letter code: MVNYPHNLIRQKVSSVQKQTKQNKVDFANRGMSFEAAINATNDYYLSRQIAVIHKKPTPVQIVKVDYPKRSRAKIVEAYFRQASTTDYCGVYKGHYVDFEAKETRQKTAMPMKNFHLHQIEHMACVLHQKGICFVLLHFSTLKETYYLPAQALISFYQIDNGSKSMPIDYIRKNGFKVAFGAFPQVPYLNIIEQNFLGGDYN.

Threonine 85, aspartate 87, glutamate 100, and glutamine 119 together coordinate Mg(2+).

This sequence belongs to the RecU family. Requires Mg(2+) as cofactor.

It localises to the cytoplasm. The enzyme catalyses Endonucleolytic cleavage at a junction such as a reciprocal single-stranded crossover between two homologous DNA duplexes (Holliday junction).. Functionally, endonuclease that resolves Holliday junction intermediates in genetic recombination. Cleaves mobile four-strand junctions by introducing symmetrical nicks in paired strands. Promotes annealing of linear ssDNA with homologous dsDNA. Required for DNA repair, homologous recombination and chromosome segregation. This Streptococcus pyogenes serotype M6 (strain ATCC BAA-946 / MGAS10394) protein is Holliday junction resolvase RecU.